Consider the following 569-residue polypeptide: MNAVMDSRGAWVSCFLILGLVFGATVKAETKFSYERLRLRVTHQTTGDEYFRFITLLRDYVSSGSFSNEIPLLRQSTIPVSDAQRFVLVELTNQGGDSITAAIDVTNLYVVAYQAGDQSYFLRDAPDGAERHLFTGTTRSSLPFTGSYTDLERYAGHRDQIPLGIEELIQSVSALRYPGGSTRAQARSIIILIQMISEAARFNPIFWRVRQDINSGESFLPDMYMLELETSWGQQSTQVQQSTDGVFNNPFRLAISTGNFVTLSNVRDVIASLAIMLFVCRDRPSSSEVRYWPLVIRPVLENSGAVDDVTCTASEPTVRIVGRDGLCVDVRDGKFHNGNPIQLSPCKSNTDPNQLWTIRRDGTIRSNGRCLTTYGYTAGVYVMIFDCNTAVREATLWQIWGNGTIINPRSNLVLGAASGSSGTTLTVQTQVYSLGQGWLAGNDTAPREVTIYGFRDLCMEANGASVWVETCGSSTENQNWALYGDGSIRPKQNQDQCLTCQGDSVATVINIVSCSAGSSGQRWVFTNEGTILNLNNGLVMDVAQSNPSLRRIIIYPATGNPNQMWLPVP.

The signal sequence occupies residues 1–33; that stretch reads MNAVMDSRGAWVSCFLILGLVFGATVKAETKFS. Glutamate 198 is a catalytic residue. 3 disulfides stabilise this stretch: cysteine 280–cysteine 311, cysteine 327–cysteine 346, and cysteine 370–cysteine 387. A propeptide spans 288–307 (connecting peptide); the sequence is EVRYWPLVIRPVLENSGAVD. The 128-residue stretch at 314–441 folds into the Ricin B-type lectin 1 domain; sequence SEPTVRIVGR…YSLGQGWLAG (128 aa). Residue 329–331 coordinates D-galactose; sequence DVR. 2 N-linked (GlcNAc...) asparagine glycosylation sites follow: asparagine 402 and asparagine 442. One can recognise a Ricin B-type lectin 2 domain in the interval 445–568; it reads APREVTIYGF…GNPNQMWLPV (124 aa). Intrachain disulfides connect cysteine 458–cysteine 471 and cysteine 497–cysteine 514. Position 541-543 (541-543) interacts with D-galactose; the sequence is DVA.

This sequence belongs to the ribosome-inactivating protein family. Type 2 RIP subfamily. In terms of assembly, disulfide-linked dimer of A and B chains.

It catalyses the reaction Endohydrolysis of the N-glycosidic bond at one specific adenosine on the 28S rRNA.. Functionally, the A chain is responsible for inhibiting protein synthesis through the catalytic inactivation of 60S ribosomal subunits by removing adenine from position 4,324 of 28S rRNA. The B chain binds to cell receptors and probably facilitates the entry into the cell of the A chain; B chains are also responsible for cell agglutination (lectin activity). Inhibits growth of the human tumor cell line Molt4. The protein is Beta-galactoside-specific lectin 3 of Viscum album (European mistletoe).